The sequence spans 313 residues: E3 ubiquitin-protein ligase SGIP1 (313 aa).

An F-box domain is found at 16–65 (REYSKEIPIDLLIEIFSRLSTGDIARCRCVSKIWSSVPRLRDFTELFLKI).

Interacts with SGS3 in cytoplasmic granules.

The protein localises to the cytoplasmic granule. The enzyme catalyses S-ubiquitinyl-[E2 ubiquitin-conjugating enzyme]-L-cysteine + [acceptor protein]-L-lysine = [E2 ubiquitin-conjugating enzyme]-L-cysteine + N(6)-ubiquitinyl-[acceptor protein]-L-lysine.. The protein operates within protein degradation; proteasomal ubiquitin-dependent pathway. It participates in protein modification; protein ubiquitination. In terms of biological role, E3 ubiquitin-protein ligase which triggers the ubiquitination and subsequent degradation of SGS3 in response to heat. Involved in the mechanisms necessary for quick response to heat and subsequent heritable transgenerational memory of heat acclimation (global warming) such as early flowering and attenuated immunity; this process includes epigenetic regulation as well as post-transcriptional gene silencing (PTGS). In response to heat, HSFA2 is activated and promotes the expression of REF6 which in turn derepresses HSFA2, thus establishing an inheritable feedback loop able to trigger SGIP1 and subsequent SGIP1-mediated SGS3 degradation; this prevents the biosynthesis of trans-acting siRNA (tasiRNA) and leads to the release of HTT5, which drives early flowering but attenuates immunity. The sequence is that of E3 ubiquitin-protein ligase SGIP1 from Arabidopsis thaliana (Mouse-ear cress).